The following is a 1310-amino-acid chain: Major viral transcription factor ICP4 homolog (1310 aa).

Disordered stretches follow at residues 117 to 271 (AGAR…GPVE), 285 to 454 (GAKA…TPII), and 636 to 697 (GSSP…LLDK). Basic and acidic residues predominate over residues 341 to 350 (PVEKKPKSRE). Low complexity-rich tracts occupy residues 351–364 (FVSSSSSSSSWGSS), 392–407 (PSPSNSDDSDSNDGGS), and 648–666 (PSPTTPATQAPDPQPSAAA). A Nuclear localization signal motif is present at residues 677–685 (RLRTPRKRK). Ser-686 and Ser-722 each carry phosphoserine; by viral VZV ORF66. 2 disordered regions span residues 1193–1258 (GTRF…SFGV) and 1282–1310 (ELLSSSSSSEDEDDVWGGRGGRSPPQSRG). Positions 1217 to 1227 (RTADDREHALE) are enriched in basic and acidic residues. A compositionally biased stretch (acidic residues) spans 1228 to 1250 (LDDWEVGCEDAWDSEEGGGDDGD).

The protein belongs to the herpesviridae ICP4 family. Interacts with IE4 and IE63. Interacts with host USF1 and SP1. Phosphorylated by ORF66 protein kinase on Ser-686 and Ser-722. Also phosphorylated by ORF47 protein kinase and by human CSNK2A1/CKII.

Its subcellular location is the host nucleus. The protein resides in the host cytoplasm. It is found in the virion tegument. Its function is as follows. Transcriptional transactivator. May interact with and recruit specific components of the general transcription machinery to viral promoters and stabilize their formation for transcription initiation. Negatively regulates its own transcription. This immediate early (EI) protein may be necessary in virion for viral pathogenesis. The chain is Major viral transcription factor ICP4 homolog from Homo sapiens (Human).